A 229-amino-acid polypeptide reads, in one-letter code: Large ribosomal subunit protein uL1 (229 aa).

This sequence belongs to the universal ribosomal protein uL1 family. Part of the 50S ribosomal subunit.

Functionally, binds directly to 23S rRNA. The L1 stalk is quite mobile in the ribosome, and is involved in E site tRNA release. In terms of biological role, protein L1 is also a translational repressor protein, it controls the translation of the L11 operon by binding to its mRNA. The polypeptide is Large ribosomal subunit protein uL1 (Mycoplasmopsis pulmonis (strain UAB CTIP) (Mycoplasma pulmonis)).